We begin with the raw amino-acid sequence, 149 residues long: Early lymphoid activation gene protein (149 aa).

In terms of tissue distribution, expressed in heart, kidney, lung, and skeletal muscle, with lower levels in pancreas and liver.

Its function is as follows. May function as an early signal that helps mediate the activation of T-cells. This chain is Early lymphoid activation gene protein (DIAPH2-AS1), found in Homo sapiens (Human).